We begin with the raw amino-acid sequence, 85 residues long: UPF0512 protein U (85 aa).

This sequence belongs to the UPF0512 family.

This chain is UPF0512 protein U, found in Dictyostelium discoideum (Social amoeba).